Consider the following 599-residue polypeptide: UvrABC system protein C (599 aa).

A GIY-YIG domain is found at 15–93 (EKPGCYQYFD…IKEYQPRYNV (79 aa)). The 36-residue stretch at 207 to 242 (HRLVRMYRDRMQVYSEGLRFEEAQICKERIELLERY) folds into the UVR domain.

This sequence belongs to the UvrC family. In terms of assembly, interacts with UvrB in an incision complex.

It localises to the cytoplasm. Functionally, the UvrABC repair system catalyzes the recognition and processing of DNA lesions. UvrC both incises the 5' and 3' sides of the lesion. The N-terminal half is responsible for the 3' incision and the C-terminal half is responsible for the 5' incision. The chain is UvrABC system protein C from Porphyromonas gingivalis (strain ATCC BAA-308 / W83).